Here is a 548-residue protein sequence, read N- to C-terminus: Probable malate:quinone oxidoreductase (548 aa).

Positions 521 to 548 (DKPQAADSTPKPQLKPQPVQKEVADIAL) are disordered. Positions 530–541 (PKPQLKPQPVQK) are enriched in low complexity.

This sequence belongs to the MQO family. Requires FAD as cofactor.

It catalyses the reaction (S)-malate + a quinone = a quinol + oxaloacetate. The protein operates within carbohydrate metabolism; tricarboxylic acid cycle; oxaloacetate from (S)-malate (quinone route): step 1/1. This Shigella sonnei (strain Ss046) protein is Probable malate:quinone oxidoreductase.